The sequence spans 233 residues: Large ribosomal subunit protein uL1 (233 aa).

The protein belongs to the universal ribosomal protein uL1 family. Part of the 50S ribosomal subunit.

Functionally, binds directly to 23S rRNA. The L1 stalk is quite mobile in the ribosome, and is involved in E site tRNA release. Protein L1 is also a translational repressor protein, it controls the translation of the L11 operon by binding to its mRNA. The protein is Large ribosomal subunit protein uL1 of Shewanella oneidensis (strain ATCC 700550 / JCM 31522 / CIP 106686 / LMG 19005 / NCIMB 14063 / MR-1).